Reading from the N-terminus, the 120-residue chain is Non-specific lipid-transfer protein (120 aa).

The signal sequence occupies residues 1 to 26; sequence MGVLRSSFVAMMVMYMVLATTPNAEA. 4 disulfides stabilise this stretch: cysteine 30/cysteine 79, cysteine 40/cysteine 56, cysteine 57/cysteine 102, and cysteine 77/cysteine 116.

It belongs to the plant LTP family. Expressed in protoderm cells of somatic and zygotic embryos, and transiently expressed in epidermal cell layers of leaves, flowers and seeds.

In terms of biological role, plant non-specific lipid-transfer proteins transfer phospholipids as well as galactolipids across membranes. May play a role in wax or cutin deposition in the cell walls of expanding epidermal cells and certain secretory tissues. This chain is Non-specific lipid-transfer protein (EP2), found in Daucus carota (Wild carrot).